Here is a 245-residue protein sequence, read N- to C-terminus: Uridylate kinase (245 aa).

ATP is bound at residue 14 to 17 (KLSG). A UMP-binding site is contributed by Gly-56. 2 residues coordinate ATP: Gly-57 and Arg-61. Residues Asp-76 and 137–144 (TGLPFFTT) each bind UMP. Residues Thr-164, Tyr-170, and Asp-173 each coordinate ATP.

This sequence belongs to the UMP kinase family. In terms of assembly, homohexamer.

The protein resides in the cytoplasm. It catalyses the reaction UMP + ATP = UDP + ADP. Its pathway is pyrimidine metabolism; CTP biosynthesis via de novo pathway; UDP from UMP (UMPK route): step 1/1. With respect to regulation, inhibited by UTP. Its function is as follows. Catalyzes the reversible phosphorylation of UMP to UDP. The chain is Uridylate kinase from Syntrophobacter fumaroxidans (strain DSM 10017 / MPOB).